The sequence spans 729 residues: Fatty acid oxidation complex subunit alpha (729 aa).

Positions 1-189 (MLYKGDTLYL…KIGLVDGVVK (189 aa)) are enoyl-CoA hydratase/isomerase. Asp296 lines the substrate pocket. The segment at 311–729 (ETPKQAAVLG…ARPVGSLKTA (419 aa)) is 3-hydroxyacyl-CoA dehydrogenase. Residues Met324, Asp343, 400-402 (VVE), Lys407, and Ser429 each bind NAD(+). Residue His450 is the For 3-hydroxyacyl-CoA dehydrogenase activity of the active site. Asn453 serves as a coordination point for NAD(+). Positions 500 and 660 each coordinate substrate. Positions 708–729 (RHNEPYYPPVEPARPVGSLKTA) are disordered.

The protein in the N-terminal section; belongs to the enoyl-CoA hydratase/isomerase family. This sequence in the C-terminal section; belongs to the 3-hydroxyacyl-CoA dehydrogenase family. Heterotetramer of two alpha chains (FadB) and two beta chains (FadA).

The enzyme catalyses a (3S)-3-hydroxyacyl-CoA + NAD(+) = a 3-oxoacyl-CoA + NADH + H(+). The catalysed reaction is a (3S)-3-hydroxyacyl-CoA = a (2E)-enoyl-CoA + H2O. It carries out the reaction a 4-saturated-(3S)-3-hydroxyacyl-CoA = a (3E)-enoyl-CoA + H2O. It catalyses the reaction (3S)-3-hydroxybutanoyl-CoA = (3R)-3-hydroxybutanoyl-CoA. The enzyme catalyses a (3Z)-enoyl-CoA = a 4-saturated (2E)-enoyl-CoA. The catalysed reaction is a (3E)-enoyl-CoA = a 4-saturated (2E)-enoyl-CoA. The protein operates within lipid metabolism; fatty acid beta-oxidation. In terms of biological role, involved in the aerobic and anaerobic degradation of long-chain fatty acids via beta-oxidation cycle. Catalyzes the formation of 3-oxoacyl-CoA from enoyl-CoA via L-3-hydroxyacyl-CoA. It can also use D-3-hydroxyacyl-CoA and cis-3-enoyl-CoA as substrate. This chain is Fatty acid oxidation complex subunit alpha, found in Salmonella schwarzengrund (strain CVM19633).